A 913-amino-acid chain; its full sequence is Auxilin (913 aa).

Methionine 1 carries the post-translational modification N-acetylmethionine. 3 repeat units span residues 36–39 (NLKD), 40–43 (NLKD), and 44–47 (TLKD). The 3 X 4 AA approximate tandem repeats stretch occupies residues 36 to 47 (NLKDNLKDTLKD). Positions 55 to 222 (SVTSYTKGDL…GYMCDLLADK (168 aa)) constitute a Phosphatase tensin-type domain. Serine 112 is subject to Phosphoserine. The active-site Phosphocysteine intermediate is cysteine 164. The region spanning 228–366 (FKPLTIKSIT…FQVTLDVELQ (139 aa)) is the C2 tensin-type domain. An SH3-binding motif is present at residues 409–417 (PIDIPPDNP). A disordered region spans residues 451-776 (QESEQSDDEL…GKGSSNLEGK (326 aa)). Serine 453 and serine 456 each carry phosphoserine. A compositionally biased stretch (polar residues) spans 506-523 (AMSNSFSPPAAPPTNSEL). Low complexity predominate over residues 554-572 (ASTQSTPRRSATSTSASPT). Phosphoserine is present on residues serine 563 and serine 570. The span at 599 to 629 (FLNTSSASSDPFLQPTRSPSPTVHASSTPAV) shows a compositional bias: polar residues. Positions 654–669 (SAATSPTGSSHGTPTH) are enriched in low complexity. The region spanning 849–913 (TKWKPVGMAD…FENQGQKPLY (65 aa)) is the J domain.

As to quaternary structure, forms a complex composed of HSPA8, CLTC and DNAJC6. Interacts with HSPA8/HSC70 in an ATP-dependent manner; this interaction stimulates the HSPA8's ATPase activity. Interacts with CLTC; this interaction produces a local change in heavy-chain contacts, creating a detectable global distortion of the clathrin coat. Interacts with AP2A2. Interacts with DNM1(GTP-bound form); this interaction allows clathrin-coated vesicle (CCV) formation at the plasma membrane. Post-translationally, phosphorylation at Ser-570 modulates its ability to bind CLTC and therefore the synaptic vesicle endocytosis (SVE). The N-terminus is blocked. Expressed in various brain regions, including cerebellum, corpus callosum, cortex, striatum, brainstem, pons, putamen, spinal cord and substantia nigra. Very low expression in non-neural tissues such as leukocytes, liver, adipose tissue, skeletal muscle and bone marrow.

The protein localises to the cytoplasmic vesicle. Its subcellular location is the clathrin-coated vesicle. Functionally, may act as a protein phosphatase and/or a lipid phosphatase. Co-chaperone that recruits HSPA8/HSC70 to clathrin-coated vesicles (CCVs) and promotes the ATP-dependent dissociation of clathrin from CCVs and participates in clathrin-mediated endocytosis of synaptic vesicles and their recycling and also in intracellular trafficking. Firstly, binds tightly to the clathrin cages, at a ratio of one DNAJC6 per clathrin triskelion. The HSPA8:ATP complex then binds to the clathrin-auxilin cage, initially at a ratio of one HSPA8 per triskelion leading to ATP hydrolysis stimulation and causing a conformational change in the HSPA8. This cycle is repeated three times to drive to a complex containing the clathrin-auxilin cage associated to three HSPA8:ADP complex. The ATP hydrolysis of the third HSPA8:ATP complex leads to a concerted dismantling of the cage into component triskelia. Then, dissociates from the released triskelia and be recycled to initiate another cycle of HSPA8's recruitment. Also acts during the early steps of clathrin-coated vesicle (CCV) formation through its interaction with the GTP bound form of DNM1. The chain is Auxilin from Homo sapiens (Human).